We begin with the raw amino-acid sequence, 559 residues long: NAD-dependent histone deacetylase SIR2 (559 aa).

A disordered region spans residues Met1–Gly73. Residues Asn39–Asp51 are compositionally biased toward basic and acidic residues. Positions Glu52 to Glu62 are enriched in acidic residues. Residues Arg223–Asp514 form the Deacetylase sirtuin-type domain. NAD(+) contacts are provided by residues Gly248–Tyr267 and Gln330–Asp333. The Proton acceptor role is filled by His350. 4 residues coordinate Zn(2+): Cys358, Cys361, Cys382, and Cys385. NAD(+) contacts are provided by residues Gly458–Ser460, Asn483–Asp485, and Cys500.

This sequence belongs to the sirtuin family. Class I subfamily. Zn(2+) serves as cofactor.

The protein resides in the nucleus. It carries out the reaction N(6)-acetyl-L-lysyl-[protein] + NAD(+) + H2O = 2''-O-acetyl-ADP-D-ribose + nicotinamide + L-lysyl-[protein]. Functionally, NAD-dependent deacetylase. Heterochromatin component that silences transcription at silent mating loci, telomeres and the ribosomal DNA, and that also suppresses recombination in the rDNA and extends replicative life span. It acts as a NAD-dependent histone deacetylase, which deacetylates 'Lys-9' and 'Lys-14' of Histone H3 and 'Lys-16' of Histone H4. In Eremothecium gossypii (strain ATCC 10895 / CBS 109.51 / FGSC 9923 / NRRL Y-1056) (Yeast), this protein is NAD-dependent histone deacetylase SIR2 (SIR2).